Here is a 1416-residue protein sequence, read N- to C-terminus: Telomere-associated protein RIF1 (1416 aa).

4 disordered regions span residues 789–858, 886–984, 1021–1054, and 1166–1186; these read PIRK…PVVQ, PEVA…HLTG, ARAQDRAEQVSTPTSELNELTGTDHTSTPIQAPP, and TARTATTDKSLDKSTGEAPEE. Over residues 928 to 945 the composition is skewed to low complexity; the sequence is GSSGDPAASAGAVAAGEM. Residues 1029–1050 are compositionally biased toward polar residues; sequence QVSTPTSELNELTGTDHTSTPI.

The protein belongs to the RIF1 family. Highly divergent. In terms of assembly, interacts with Pp1-87b. Interacts with SuUR (via SNF2-like region). Post-translationally, phosphorylated, probably by Cdk1; phosphorylation regulates dissociation from heterochromatin. Expressed in nurse cells and follicle cells in the adult female (at protein level). Detected in adult at extremely low levels.

It is found in the nucleus. The protein localises to the chromosome. The protein resides in the telomere. Its function is as follows. Regulates the timing of initiation of DNA replication. Functions in copy number control by promoting the underreplication of DNA, which is found in many late replicating euchromatic regions of salivary gland polytene chromosomes. Promotes underreplication by localizing to active DNA replication forks in a partially SuUR-dependent manner, and inhibiting replication fork progression. Might also work as an adapter to recruit Pp1-87B to multiple sites on the chromosome and may function with Pp1-87B to mediate underreplication. Plays an essential role in embryonic development, in the transition from larvae to pupae and, probably, in proliferating tissues later on. In embryos, during mid-blastula transition, binds to and selectively delays the replication of large blocks of repetitive DNA satellite sequences during S phase in response to the activity of Cdk1; maternal Rif1 is specifically required for the normal extension of S phase 14. Unlike mammalian orthologs, does not appear to play a role in DNA damage repair. This chain is Telomere-associated protein RIF1, found in Drosophila melanogaster (Fruit fly).